Consider the following 189-residue polypeptide: uncharacterized protein (189 aa).

Positions 1-23 (MIKTTPHKIVILMGILLSPSVFA) are cleaved as a signal peptide. Positions 104–125 (SSPKLIIPQSGDSSSTTSNIGM) are disordered. The segment covering 113–123 (SGDSSSTTSNI) has biased composition (polar residues).

Belongs to the fimbrial protein family.

It localises to the fimbrium. Functionally, part of the yadCKLM-htrE-yadVN fimbrial operon. Could contribute to adhesion to various surfaces in specific environmental niches. This is an uncharacterized protein from Escherichia coli (strain K12).